Reading from the N-terminus, the 207-residue chain is MSEHQTPPEEDLTVANGDSAEAVSEPDVTVASGQEAAELAAQLALVAADRDRLKTELDEQNSAYLRLAADFENFRRRTLKEREELELQSKRTTITELLPVIDNFDRARAQIKPQGEEAEAIHKSYQGLYKQLVDCLKRIGVSPMRAEGQPFDPSLHDAVLREETTEHPDGIVLEELQRGYLLGDLVLRHALVKVSIAAEENSAAVTE.

The tract at residues 1–31 is disordered; that stretch reads MSEHQTPPEEDLTVANGDSAEAVSEPDVTVA.

The protein belongs to the GrpE family. Homodimer.

It is found in the cytoplasm. In terms of biological role, participates actively in the response to hyperosmotic and heat shock by preventing the aggregation of stress-denatured proteins, in association with DnaK and GrpE. It is the nucleotide exchange factor for DnaK and may function as a thermosensor. Unfolded proteins bind initially to DnaJ; upon interaction with the DnaJ-bound protein, DnaK hydrolyzes its bound ATP, resulting in the formation of a stable complex. GrpE releases ADP from DnaK; ATP binding to DnaK triggers the release of the substrate protein, thus completing the reaction cycle. Several rounds of ATP-dependent interactions between DnaJ, DnaK and GrpE are required for fully efficient folding. In Synechococcus elongatus (strain ATCC 33912 / PCC 7942 / FACHB-805) (Anacystis nidulans R2), this protein is Protein GrpE.